Reading from the N-terminus, the 317-residue chain is Small ribosomal subunit biogenesis GTPase RsgA (317 aa).

The region spanning Asp-88–Phe-249 is the CP-type G domain. Residues Asn-136–Asp-139 and Gly-190–Thr-198 contribute to the GTP site. Residues Cys-273, Cys-278, His-280, and Cys-286 each coordinate Zn(2+).

This sequence belongs to the TRAFAC class YlqF/YawG GTPase family. RsgA subfamily. As to quaternary structure, monomer. Associates with 30S ribosomal subunit, binds 16S rRNA. Zn(2+) serves as cofactor.

The protein resides in the cytoplasm. Functionally, one of several proteins that assist in the late maturation steps of the functional core of the 30S ribosomal subunit. Helps release RbfA from mature subunits. May play a role in the assembly of ribosomal proteins into the subunit. Circularly permuted GTPase that catalyzes slow GTP hydrolysis, GTPase activity is stimulated by the 30S ribosomal subunit. This chain is Small ribosomal subunit biogenesis GTPase RsgA, found in Paraburkholderia phymatum (strain DSM 17167 / CIP 108236 / LMG 21445 / STM815) (Burkholderia phymatum).